The sequence spans 137 residues: Methylglyoxal synthase (137 aa).

Residues 1-137 (MKIALIAHDK…NLVRGGEPNV (137 aa)) form the MGS-like domain. Residues His-8, Lys-12, 34-37 (TGTT), and 54-55 (SG) contribute to the substrate site. The Proton donor/acceptor role is filled by Asp-60. His-87 is a substrate binding site.

The protein belongs to the methylglyoxal synthase family.

The catalysed reaction is dihydroxyacetone phosphate = methylglyoxal + phosphate. Functionally, catalyzes the formation of methylglyoxal from dihydroxyacetone phosphate. In Bacillus velezensis (strain DSM 23117 / BGSC 10A6 / LMG 26770 / FZB42) (Bacillus amyloliquefaciens subsp. plantarum), this protein is Methylglyoxal synthase.